Here is a 379-residue protein sequence, read N- to C-terminus: Glutamate 5-kinase (379 aa).

Lys-20 serves as a coordination point for ATP. Positions 59, 146, and 158 each coordinate substrate. An ATP-binding site is contributed by 220-226 (SGGMYSK). The region spanning 285-362 (TGSVVVDDGA…AELTAILGDN (78 aa)) is the PUA domain.

This sequence belongs to the glutamate 5-kinase family.

The protein localises to the cytoplasm. It catalyses the reaction L-glutamate + ATP = L-glutamyl 5-phosphate + ADP. Its pathway is amino-acid biosynthesis; L-proline biosynthesis; L-glutamate 5-semialdehyde from L-glutamate: step 1/2. Its function is as follows. Catalyzes the transfer of a phosphate group to glutamate to form L-glutamate 5-phosphate. In Oleidesulfovibrio alaskensis (strain ATCC BAA-1058 / DSM 17464 / G20) (Desulfovibrio alaskensis), this protein is Glutamate 5-kinase.